We begin with the raw amino-acid sequence, 136 residues long: Translation initiation factor 5A (136 aa).

The residue at position 36 (Lys36) is a Hypusine.

This sequence belongs to the eIF-5A family.

The protein localises to the cytoplasm. Functions by promoting the formation of the first peptide bond. This Hyperthermus butylicus (strain DSM 5456 / JCM 9403 / PLM1-5) protein is Translation initiation factor 5A (eIF5A).